The chain runs to 648 residues: DNA ligase (648 aa).

NAD(+)-binding positions include 63 to 67 and 105 to 106; these read DILYD and ST. Lysine 143 serves as the catalytic N6-AMP-lysine intermediate. Positions 159, 190, and 302 each coordinate NAD(+). Residues cysteine 390, cysteine 393, cysteine 406, and cysteine 412 each contribute to the Zn(2+) site. Positions 570 to 648 constitute a BRCT domain; sequence SLASPLTGKI…SEQEYLDLIS (79 aa).

The protein belongs to the NAD-dependent DNA ligase family. LigA subfamily. Mg(2+) is required as a cofactor. It depends on Mn(2+) as a cofactor.

It carries out the reaction NAD(+) + (deoxyribonucleotide)n-3'-hydroxyl + 5'-phospho-(deoxyribonucleotide)m = (deoxyribonucleotide)n+m + AMP + beta-nicotinamide D-nucleotide.. Functionally, DNA ligase that catalyzes the formation of phosphodiester linkages between 5'-phosphoryl and 3'-hydroxyl groups in double-stranded DNA using NAD as a coenzyme and as the energy source for the reaction. It is essential for DNA replication and repair of damaged DNA. The polypeptide is DNA ligase (Shewanella baltica (strain OS155 / ATCC BAA-1091)).